Reading from the N-terminus, the 448-residue chain is Fibulin-5 (448 aa).

Residues 1 to 23 (MPGLKRILTVTILALWLPHPGNA) form the signal peptide. One can recognise an EGF-like 1; calcium-binding domain in the interval 42–82 (DIDECRTIPEACRGDMMCVNQNGGYLCIPRTNPVYRGPYSN). 17 cysteine pairs are disulfide-bonded: Cys46-Cys59, Cys53-Cys68, Cys131-Cys144, Cys138-Cys153, Cys155-Cys166, Cys172-Cys181, Cys177-Cys190, Cys192-Cys205, Cys211-Cys221, Cys217-Cys230, Cys232-Cys245, Cys251-Cys262, Cys258-Cys271, Cys273-Cys286, Cys292-Cys305, Cys299-Cys314, and Cys320-Cys332. Residues 54 to 56 (RGD) carry the Cell attachment site motif. Positions 127-167 (DVDECATDSHQCNPTQICINTEGGYTCSCTDGYWLLEGQCL) constitute an EGF-like 2; calcium-binding domain. One can recognise an EGF-like 3; calcium-binding domain in the interval 168-206 (DIDECRYGYCQQLCANVPGSYSCTCNPGFTLNDDGRSCQ). The 40-residue stretch at 207 to 246 (DVNECETENPCVQTCVNTYGSFICRCDPGYELEEDGIHCS) folds into the EGF-like 4; calcium-binding domain. Positions 245-448 (CSDMDECSFS…LRIYVSQYPF (204 aa)) are interaction with LOXL1. The region spanning 247 to 287 (DMDECSFSEFLCQHECVNQPGSYFCSCPPGYVLLEDNRSCQ) is the EGF-like 5; calcium-binding domain. Residues Asn283 and Asn296 are each glycosylated (N-linked (GlcNAc...) asparagine). Residues 288 to 333 (DINECEHRNHTCTPLQTCYNLQGGFKCIDPIVCEEPYLLIGDNRCM) form the EGF-like 6; calcium-binding domain.

The protein belongs to the fibulin family. In terms of assembly, homodimer. Monomer, homodimerizes in presence of Ca(2+). Interacts with ELN. Interacts (via N-terminus) with the integrins ITGAV/ITGB3, ITGAV/ITGB5 and ITGA9/ITGB1. Interacts with FBN1 (via N-terminal domain). Forms a ternary complex with ELN and FBN1. Interacts with EFEMP2 with moderate affinity. Interacts with LOXL1. In terms of processing, N-glycosylated.

The protein localises to the secreted. It is found in the extracellular space. It localises to the extracellular matrix. Its function is as follows. Essential for elastic fiber formation, is involved in the assembly of continuous elastin (ELN) polymer and promotes the interaction of microfibrils and ELN. Stabilizes and organizes elastic fibers in the skin, lung and vasculature. Promotes adhesion of endothelial cells through interaction of integrins and the RGD motif. Vascular ligand for integrin receptors which may play a role in vascular development and remodeling. May act as an adapter that mediates the interaction between FBN1 and ELN. The polypeptide is Fibulin-5 (Fbln5) (Rattus norvegicus (Rat)).